Here is a 69-residue protein sequence, read N- to C-terminus: Nodulin-3 (69 aa).

The first 24 residues, 1-24, serve as a signal peptide directing secretion; the sequence is MAKILKFVFAIILFFSLFLLSMEA.

The sequence is that of Nodulin-3 (ENOD3) from Pisum sativum (Garden pea).